We begin with the raw amino-acid sequence, 642 residues long: tRNA uridine 5-carboxymethylaminomethyl modification enzyme MnmG (642 aa).

Residues Gly10–Gly15, Val122, and Ser177 contribute to the FAD site. An NAD(+)-binding site is contributed by Ser269–Phe283. Gln366 serves as a coordination point for FAD.

Belongs to the MnmG family. Homodimer. Heterotetramer of two MnmE and two MnmG subunits. Requires FAD as cofactor.

It is found in the cytoplasm. Functionally, NAD-binding protein involved in the addition of a carboxymethylaminomethyl (cmnm) group at the wobble position (U34) of certain tRNAs, forming tRNA-cmnm(5)s(2)U34. This chain is tRNA uridine 5-carboxymethylaminomethyl modification enzyme MnmG, found in Syntrophobacter fumaroxidans (strain DSM 10017 / MPOB).